The sequence spans 190 residues: Dynactin subunit 6 (190 aa).

T186 bears the Phosphothreonine mark.

It belongs to the dynactin subunits 5/6 family. Dynactin subunit 6 subfamily. In terms of assembly, subunit of dynactin, a multiprotein complex part of a tripartite complex with dynein and a adapter, such as BICDL1, BICD2 or HOOK3. The dynactin complex is built around ACTR1A/ACTB filament and consists of an actin-related filament composed of a shoulder domain, a pointed end and a barbed end. Its length is defined by its flexible shoulder domain. The soulder is composed of 2 DCTN1 subunits, 4 DCTN2 and 2 DCTN3. The 4 DCNT2 (via N-terminus) bind the ACTR1A filament and act as molecular rulers to determine the length. The pointed end is important for binding dynein-dynactin cargo adapters. Consists of 4 subunits: ACTR10, DCNT4, DCTN5 and DCTN6. Within the complex DCTN6 forms a heterodimer with DCTN5. The barbed end is composed of a CAPZA1:CAPZB heterodimers, which binds ACTR1A/ACTB filament and dynactin and stabilizes dynactin. Interacts with PLK1. Interacts with N4BP2L1. Phosphorylation at Thr-186 by CDK1 during mitotic prometaphase creates a binding site for PLK1 that facilitates its recruitment to kinetochores.

The protein localises to the cytoplasm. It is found in the cytoskeleton. The protein resides in the chromosome. It localises to the centromere. Its subcellular location is the kinetochore. Functionally, part of the dynactin complex that activates the molecular motor dynein for ultra-processive transport along microtubules. The sequence is that of Dynactin subunit 6 (DCTN6) from Sus scrofa (Pig).